We begin with the raw amino-acid sequence, 78 residues long: RNA-binding protein Hfq (78 aa).

A Sm domain is found at 10 to 69 (DPFLNALRKEHVPVSIYLVNGIKLQGNIESFDQYVVLLRNTVTQMVYKHAISTVVPARPV).

Belongs to the Hfq family. Homohexamer.

RNA chaperone that binds small regulatory RNA (sRNAs) and mRNAs to facilitate mRNA translational regulation in response to envelope stress, environmental stress and changes in metabolite concentrations. Also binds with high specificity to tRNAs. The protein is RNA-binding protein Hfq of Paraburkholderia phymatum (strain DSM 17167 / CIP 108236 / LMG 21445 / STM815) (Burkholderia phymatum).